Consider the following 143-residue polypeptide: Large ribosomal subunit protein uL11 (143 aa).

This sequence belongs to the universal ribosomal protein uL11 family. As to quaternary structure, part of the ribosomal stalk of the 50S ribosomal subunit. Interacts with L10 and the large rRNA to form the base of the stalk. L10 forms an elongated spine to which L12 dimers bind in a sequential fashion forming a multimeric L10(L12)X complex. One or more lysine residues are methylated.

Functionally, forms part of the ribosomal stalk which helps the ribosome interact with GTP-bound translation factors. The protein is Large ribosomal subunit protein uL11 of Paraburkholderia xenovorans (strain LB400).